Here is a 557-residue protein sequence, read N- to C-terminus: 2,3-bisphosphoglycerate-independent phosphoglycerate mutase 1 (557 aa).

Residues aspartate 27 and serine 80 each contribute to the Mn(2+) site. The active-site Phosphoserine intermediate is serine 80. Residues histidine 139, 169-170, arginine 205, arginine 212, 285-288, and lysine 360 contribute to the substrate site; these read RD and RADR. Residues aspartate 429, histidine 433, aspartate 470, histidine 471, and histidine 500 each coordinate Mn(2+).

Belongs to the BPG-independent phosphoglycerate mutase family. In terms of assembly, monomer. Mn(2+) serves as cofactor.

It is found in the cytoplasm. It carries out the reaction (2R)-2-phosphoglycerate = (2R)-3-phosphoglycerate. The protein operates within carbohydrate degradation; glycolysis; pyruvate from D-glyceraldehyde 3-phosphate: step 3/5. In terms of biological role, catalyzes the interconversion of 2-phosphoglycerate (2-PGA) and 3-phosphoglycerate (3-PGA). Required for guard cell function (e.g. blue light-, abscisic acid- (ABA), and low CO(2)-regulated stomatal movements) and fertility (e.g. pollen grains production). The polypeptide is 2,3-bisphosphoglycerate-independent phosphoglycerate mutase 1 (PGM1) (Arabidopsis thaliana (Mouse-ear cress)).